The primary structure comprises 151 residues: Small ribosomal subunit protein uS15 (151 aa).

It belongs to the universal ribosomal protein uS15 family.

This chain is Small ribosomal subunit protein uS15 (RPS13), found in Wuchereria bancrofti.